Reading from the N-terminus, the 185-residue chain is ATP synthase subunit b 1 (185 aa).

A helical transmembrane segment spans residues 4 to 24 (TLAIALTLATTSPAFAAGGGW).

Belongs to the ATPase B chain family. As to quaternary structure, F-type ATPases have 2 components, F(1) - the catalytic core - and F(0) - the membrane proton channel. F(1) has five subunits: alpha(3), beta(3), gamma(1), delta(1), epsilon(1). F(0) has three main subunits: a(1), b(2) and c(10-14). The alpha and beta chains form an alternating ring which encloses part of the gamma chain. F(1) is attached to F(0) by a central stalk formed by the gamma and epsilon chains, while a peripheral stalk is formed by the delta and b chains.

It is found in the cell inner membrane. F(1)F(0) ATP synthase produces ATP from ADP in the presence of a proton or sodium gradient. F-type ATPases consist of two structural domains, F(1) containing the extramembraneous catalytic core and F(0) containing the membrane proton channel, linked together by a central stalk and a peripheral stalk. During catalysis, ATP synthesis in the catalytic domain of F(1) is coupled via a rotary mechanism of the central stalk subunits to proton translocation. In terms of biological role, component of the F(0) channel, it forms part of the peripheral stalk, linking F(1) to F(0). This Ruegeria sp. (strain TM1040) (Silicibacter sp.) protein is ATP synthase subunit b 1.